A 186-amino-acid polypeptide reads, in one-letter code: Large ribosomal subunit protein uL5 (186 aa).

The protein belongs to the universal ribosomal protein uL5 family. As to quaternary structure, part of the 50S ribosomal subunit; part of the 5S rRNA/L5/L18/L25 subcomplex. Contacts the 5S rRNA and the P site tRNA. Forms a bridge to the 30S subunit in the 70S ribosome.

This is one of the proteins that bind and probably mediate the attachment of the 5S RNA into the large ribosomal subunit, where it forms part of the central protuberance. In the 70S ribosome it contacts protein S13 of the 30S subunit (bridge B1b), connecting the 2 subunits; this bridge is implicated in subunit movement. Contacts the P site tRNA; the 5S rRNA and some of its associated proteins might help stabilize positioning of ribosome-bound tRNAs. The polypeptide is Large ribosomal subunit protein uL5 (Porphyromonas gingivalis (strain ATCC 33277 / DSM 20709 / CIP 103683 / JCM 12257 / NCTC 11834 / 2561)).